The chain runs to 286 residues: NAD kinase (286 aa).

Residue Asp74 is the Proton acceptor of the active site. Residues Asp74–Gly75, Asn148–Asp149, Asp178, Ala186, Thr189–Ser194, and Gln244 contribute to the NAD(+) site.

Belongs to the NAD kinase family. Requires a divalent metal cation as cofactor.

The protein localises to the cytoplasm. The catalysed reaction is NAD(+) + ATP = ADP + NADP(+) + H(+). Functionally, involved in the regulation of the intracellular balance of NAD and NADP, and is a key enzyme in the biosynthesis of NADP. Catalyzes specifically the phosphorylation on 2'-hydroxyl of the adenosine moiety of NAD to yield NADP. In Campylobacter jejuni subsp. jejuni serotype O:23/36 (strain 81-176), this protein is NAD kinase.